The primary structure comprises 166 residues: Protein UTR5 (166 aa).

In Saccharomyces cerevisiae (strain ATCC 204508 / S288c) (Baker's yeast), this protein is Protein UTR5 (UTR5).